We begin with the raw amino-acid sequence, 468 residues long: Lactate utilization protein B (468 aa).

4Fe-4S ferredoxin-type domains follow at residues 303-333 (GTQFQSVLQCIRCAACINVCPVYRHIGGHAY) and 352-381 (YENYKELPYASSLCGACTEACPVKIPLHEL). 7 residues coordinate [4Fe-4S] cluster: Cys-312, Cys-315, Cys-318, Cys-322, Cys-365, Cys-368, and Cys-372. The segment at 442 to 468 (PAWTDSKDLPQPNKQTVRDWFKKRGNA) is disordered. The segment covering 457 to 468 (TVRDWFKKRGNA) has biased composition (basic and acidic residues).

This sequence belongs to the LutB/YkgF family.

Is involved in L-lactate degradation and allows cells to grow with lactate as the sole carbon source. Has probably a role as an electron transporter during oxidation of L-lactate. This Exiguobacterium sp. (strain ATCC BAA-1283 / AT1b) protein is Lactate utilization protein B.